A 157-amino-acid chain; its full sequence is Protein Smg homolog (157 aa).

The protein belongs to the Smg family.

The chain is Protein Smg homolog from Xylella fastidiosa (strain M23).